Consider the following 170-residue polypeptide: Ribosome maturation factor RimM (170 aa).

Residues proline 98 to phenylalanine 170 form the PRC barrel domain.

This sequence belongs to the RimM family. As to quaternary structure, binds ribosomal protein uS19.

It is found in the cytoplasm. Its function is as follows. An accessory protein needed during the final step in the assembly of 30S ribosomal subunit, possibly for assembly of the head region. Essential for efficient processing of 16S rRNA. May be needed both before and after RbfA during the maturation of 16S rRNA. It has affinity for free ribosomal 30S subunits but not for 70S ribosomes. The polypeptide is Ribosome maturation factor RimM (Xanthomonas oryzae pv. oryzae (strain MAFF 311018)).